The sequence spans 1048 residues: Dyslexia-associated protein KIAA0319-like protein (1048 aa).

Residues 1 to 29 (MEKRLGVKPSPASWVLPGYCWQTSVKLPR) are Cytoplasmic-facing. Residues 30 to 50 (SLYLLYSFFCFSVLWLSTDAD) form a helical membrane-spanning segment. Residues 49-127 (ADESRCQQGK…PFRTDSSNSM (79 aa)) form the MANSC domain. Over 51–928 (ESRCQQGKTL…RDGDSNCEWS (878 aa)) the chain is Extracellular. Disordered regions lie at residues 198-218 (HGAMQHSKVNHSEEAGALSPT) and 231-300 (SFTS…STSA). Positions 231–241 (SFTSNHTTQTP) are enriched in polar residues. N-linked (GlcNAc...) asparagine glycosylation is present at asparagine 246. Low complexity-rich tracts occupy residues 247–261 (VSIHPEPSEHSSPVS) and 287–300 (ATPTPQASSQSTSA). PKD domains lie at 309 to 400 (VVSA…VKPE), 408 to 497 (VAVV…VNKA), 503 to 593 (VANA…VQPE), 599 to 687 (QADA…VKEE), and 693 to 784 (VAKI…VKPD). An N-linked (GlcNAc...) asparagine glycan is attached at asparagine 394. The segment at 593-623 (ENNKPPQADAGPDKELTLPVDSTTLDGSKST) is disordered. Residues 929 to 949 (VLYVIIASFVIVVALGILSWT) form a helical membrane-spanning segment. At 950–1048 (TICCCKRQKG…KSRSAREEIL (99 aa)) the chain is on the cytoplasmic side. Residue threonine 973 is modified to Phosphothreonine. Serine 977 bears the Phosphoserine mark. The segment at 980 to 1007 (LKPTSRAGSKQKGPTLSSSLMHSESELD) is disordered. Positions 985-994 (RAGSKQKGPT) are enriched in polar residues. 2 positions are modified to phosphoserine: serine 1008 and serine 1030. Positions 1024-1048 (LYGQNGSVPNGQTPLKSRSAREEIL) are disordered. Residues 1027–1039 (QNGSVPNGQTPLK) are compositionally biased toward polar residues. A Phosphothreonine modification is found at threonine 1036.

In terms of assembly, interacts with RTN4R. Post-translationally, N-glycosylated.

It is found in the cytoplasmic granule membrane. It localises to the golgi apparatus membrane. The protein resides in the golgi apparatus. Its subcellular location is the trans-Golgi network membrane. The protein localises to the cell membrane. Functionally, possible role in axon guidance through interaction with RTN4R. Its function is as follows. (Microbial infection) Acts as a receptor for adeno-associated virus and is involved in adeno-associated virus infection through endocytosis system. In Mus musculus (Mouse), this protein is Dyslexia-associated protein KIAA0319-like protein.